A 349-amino-acid chain; its full sequence is Isopentenyl-diphosphate delta-isomerase (349 aa).

9-10 lines the substrate pocket; sequence RK. FMN contacts are provided by residues 65–67, Ser-95, and Asn-124; that span reads AMT. Residue 95 to 97 coordinates substrate; the sequence is STH. Gln-154 serves as a coordination point for substrate. Residue Glu-155 coordinates Mg(2+). FMN contacts are provided by residues Lys-186, Ser-211, Thr-216, 262–264, and 283–284; these read GLR and SR.

This sequence belongs to the IPP isomerase type 2 family. In terms of assembly, homooctamer. Dimer of tetramers. FMN is required as a cofactor. Requires NADPH as cofactor. Mg(2+) serves as cofactor.

It localises to the cytoplasm. It carries out the reaction isopentenyl diphosphate = dimethylallyl diphosphate. Involved in the biosynthesis of isoprenoids. Catalyzes the 1,3-allylic rearrangement of the homoallylic substrate isopentenyl (IPP) to its allylic isomer, dimethylallyl diphosphate (DMAPP). The chain is Isopentenyl-diphosphate delta-isomerase from Staphylococcus aureus (strain USA300 / TCH1516).